The chain runs to 161 residues: DNA-directed RNA polymerase 19 kDa subunit (161 aa).

The span at methionine 1–aspartate 32 shows a compositional bias: acidic residues. The disordered stretch occupies residues methionine 1–proline 35.

It belongs to the poxviridae DNA-directed RNA polymerase 19 kDa subunit family. As to quaternary structure, the DNA-dependent RNA polymerase used for intermediate and late genes expression consists of eight subunits Rpo30/OPG66, Rpo7/OPG90, Rpo22/OPG103, Rpo147/OPG105, Rpo18/OPG119, Rpo19/OPG131, Rpo132/OPG151 and Rpo35/OPG156. The same holoenzyme, with the addition of the transcription-specificity factor OPG109, is used for early gene expression.

It localises to the virion. The enzyme catalyses RNA(n) + a ribonucleoside 5'-triphosphate = RNA(n+1) + diphosphate. Functionally, part of the DNA-dependent RNA polymerase which catalyzes the transcription of viral DNA into RNA using the four ribonucleoside triphosphates as substrates. Responsible for the transcription of early, intermediate and late genes. DNA-dependent RNA polymerase associates with the early transcription factor (ETF), itself composed of OPG118 and OPG133, thereby allowing the early genes transcription. Late transcription, and probably also intermediate transcription, require newly synthesized RNA polymerase. This is DNA-directed RNA polymerase 19 kDa subunit (OPG131) from Monkeypox virus.